A 129-amino-acid chain; its full sequence is Follitropin subunit beta (129 aa).

Positions 1–19 are cleaved as a signal peptide; that stretch reads MKSVQFCFLFCCWRAICCR. 6 cysteine pairs are disulfide-bonded: Cys21/Cys69, Cys35/Cys84, Cys38/Cys122, Cys46/Cys100, Cys50/Cys102, and Cys105/Cys112. Residues Asn25 and Asn42 are each glycosylated (N-linked (GlcNAc...) asparagine).

Belongs to the glycoprotein hormones subunit beta family. As to quaternary structure, heterodimer. The active follitropin is a heterodimer composed of an alpha chain/CGA shared with other hormones and a unique beta chain/FSHB shown here.

The protein resides in the secreted. Its function is as follows. Together with the alpha chain CGA constitutes follitropin, the follicle-stimulating hormone, and provides its biological specificity to the hormone heterodimer. Binds FSHR, a G protein-coupled receptor, on target cells to activate downstream signaling pathways. Follitropin is involved in follicle development and spermatogenesis in reproductive organs. The polypeptide is Follitropin subunit beta (FSHB) (Ovis aries (Sheep)).